A 1109-amino-acid chain; its full sequence is ABC transporter G family member 28 (1109 aa).

Helical transmembrane passes span 5–25 (NSYF…LILQ) and 291–311 (NITA…IILY). The interval 325–411 (QAKSREKAVQ…DTKKGKKKEK (87 aa)) is disordered. Basic and acidic residues predominate over residues 339 to 357 (SQSREKWKSAKDIAKKHAT). The ABC transporter domain maps to 499 to 741 (VAFKDLSITL…FSSLGIVVPE (243 aa)). ATP is bound at residue 533 to 540 (GPSGAGKT). The 198-residue stretch at 859–1056 (QQYRYFLGRL…ALEAFVVSNA (198 aa)) folds into the ABC transmembrane type-2 domain. 6 helical membrane passes run 879–899 (LAVD…LAKV), 904–924 (FGAM…KITA), 954–974 (TVDH…FYFF), 986–1006 (VVLI…AILF), 1008–1028 (PGPA…IATS), and 1084–1104 (CLVF…FCMV).

The protein belongs to the ABC transporter superfamily. ABCG family. Eye pigment precursor importer (TC 3.A.1.204) subfamily.

The protein localises to the membrane. In Arabidopsis thaliana (Mouse-ear cress), this protein is ABC transporter G family member 28 (ABCG28).